The following is a 262-amino-acid chain: DNA-directed RNA polymerase subunit Rpo3 (262 aa).

The protein belongs to the archaeal Rpo3/eukaryotic RPB3 RNA polymerase subunit family. As to quaternary structure, part of the RNA polymerase complex.

The protein localises to the cytoplasm. The catalysed reaction is RNA(n) + a ribonucleoside 5'-triphosphate = RNA(n+1) + diphosphate. DNA-dependent RNA polymerase (RNAP) catalyzes the transcription of DNA into RNA using the four ribonucleoside triphosphates as substrates. This chain is DNA-directed RNA polymerase subunit Rpo3, found in Pyrobaculum neutrophilum (strain DSM 2338 / JCM 9278 / NBRC 100436 / V24Sta) (Thermoproteus neutrophilus).